The primary structure comprises 578 residues: A-type ATP synthase subunit A (578 aa).

Gly228–Thr235 lines the ATP pocket.

It belongs to the ATPase alpha/beta chains family. In terms of assembly, has multiple subunits with at least A(3), B(3), C, D, E, F, G, I and proteolipid K(x).

The protein localises to the cell membrane. It carries out the reaction ATP + H2O + 4 H(+)(in) = ADP + phosphate + 5 H(+)(out). With respect to regulation, ATP hydrolysis stimulated by sulfite, ethanol, glycerol, magnesium and zinc ions, inhibited by diethylstilbestrol (DES) and less well by N,N-dicyclohexylcarbodiimide (DCCD). Its function is as follows. Component of the A-type ATP synthase that produces ATP from ADP in the presence of a proton gradient across the membrane. The A chain is the catalytic subunit. The chain is A-type ATP synthase subunit A from Methanosarcina mazei (strain ATCC BAA-159 / DSM 3647 / Goe1 / Go1 / JCM 11833 / OCM 88) (Methanosarcina frisia).